A 370-amino-acid chain; its full sequence is Queuine tRNA-ribosyltransferase (370 aa).

The Proton acceptor role is filled by Asp-93. Residues 93 to 97, Asp-147, Gln-190, and Gly-217 contribute to the substrate site; that span reads DSGGF. The RNA binding stretch occupies residues 248–254; it reads GVGTPDY. Asp-267 functions as the Nucleophile in the catalytic mechanism. An RNA binding; important for wobble base 34 recognition region spans residues 272–276; the sequence is TRVAR. 4 residues coordinate Zn(2+): Cys-305, Cys-307, Cys-310, and His-336.

The protein belongs to the queuine tRNA-ribosyltransferase family. Homodimer. Within each dimer, one monomer is responsible for RNA recognition and catalysis, while the other monomer binds to the replacement base PreQ1. Zn(2+) serves as cofactor.

The catalysed reaction is 7-aminomethyl-7-carbaguanine + guanosine(34) in tRNA = 7-aminomethyl-7-carbaguanosine(34) in tRNA + guanine. The protein operates within tRNA modification; tRNA-queuosine biosynthesis. Catalyzes the base-exchange of a guanine (G) residue with the queuine precursor 7-aminomethyl-7-deazaguanine (PreQ1) at position 34 (anticodon wobble position) in tRNAs with GU(N) anticodons (tRNA-Asp, -Asn, -His and -Tyr). Catalysis occurs through a double-displacement mechanism. The nucleophile active site attacks the C1' of nucleotide 34 to detach the guanine base from the RNA, forming a covalent enzyme-RNA intermediate. The proton acceptor active site deprotonates the incoming PreQ1, allowing a nucleophilic attack on the C1' of the ribose to form the product. After dissociation, two additional enzymatic reactions on the tRNA convert PreQ1 to queuine (Q), resulting in the hypermodified nucleoside queuosine (7-(((4,5-cis-dihydroxy-2-cyclopenten-1-yl)amino)methyl)-7-deazaguanosine). This is Queuine tRNA-ribosyltransferase from Natranaerobius thermophilus (strain ATCC BAA-1301 / DSM 18059 / JW/NM-WN-LF).